Reading from the N-terminus, the 464-residue chain is tRNA modification GTPase MnmE (464 aa).

3 residues coordinate (6S)-5-formyl-5,6,7,8-tetrahydrofolate: arginine 23, glutamate 84, and arginine 123. A TrmE-type G domain is found at glycine 216–leucine 386. Asparagine 226 is a binding site for K(+). Residues asparagine 226–serine 231, threonine 245–threonine 251, and aspartate 270–glycine 273 each bind GTP. Serine 230 serves as a coordination point for Mg(2+). 3 residues coordinate K(+): threonine 245, isoleucine 247, and threonine 250. Threonine 251 is a binding site for Mg(2+). A (6S)-5-formyl-5,6,7,8-tetrahydrofolate-binding site is contributed by lysine 464.

This sequence belongs to the TRAFAC class TrmE-Era-EngA-EngB-Septin-like GTPase superfamily. TrmE GTPase family. In terms of assembly, homodimer. Heterotetramer of two MnmE and two MnmG subunits. The cofactor is K(+).

The protein localises to the cytoplasm. Exhibits a very high intrinsic GTPase hydrolysis rate. Involved in the addition of a carboxymethylaminomethyl (cmnm) group at the wobble position (U34) of certain tRNAs, forming tRNA-cmnm(5)s(2)U34. This is tRNA modification GTPase MnmE from Roseiflexus castenholzii (strain DSM 13941 / HLO8).